We begin with the raw amino-acid sequence, 134 residues long: Small ribosomal subunit protein bS16 (134 aa).

The disordered stretch occupies residues 105-134 (EAERRQKRLTAKTRRRQAKKAAEAAGSAEG). Positions 109-123 (RQKRLTAKTRRRQAK) are enriched in basic residues.

Belongs to the bacterial ribosomal protein bS16 family.

The protein is Small ribosomal subunit protein bS16 of Chlorobaculum parvum (strain DSM 263 / NCIMB 8327) (Chlorobium vibrioforme subsp. thiosulfatophilum).